A 194-amino-acid polypeptide reads, in one-letter code: Adenylate kinase (194 aa).

11–16 lines the ATP pocket; that stretch reads GSGKGT. Residues 31-60 form an NMP region; sequence STGELLRAEIKAQTELGQAAAGYINEGHLV. Residues T32, R37, 58–60, 86–89, and Q93 each bind AMP; these read HLV and GFPR. The LID stretch occupies residues 127–137; that stretch reads NRGKVSGRSDD. ATP is bound at residue R128. Residues R134 and R145 each coordinate AMP. Residue G173 participates in ATP binding.

Belongs to the adenylate kinase family. As to quaternary structure, monomer.

The protein resides in the cytoplasm. The enzyme catalyses AMP + ATP = 2 ADP. Its pathway is purine metabolism; AMP biosynthesis via salvage pathway; AMP from ADP: step 1/1. Functionally, catalyzes the reversible transfer of the terminal phosphate group between ATP and AMP. Plays an important role in cellular energy homeostasis and in adenine nucleotide metabolism. The protein is Adenylate kinase of Porphyromonas gingivalis (strain ATCC BAA-308 / W83).